We begin with the raw amino-acid sequence, 139 residues long: Ribonuclease VapC39 (139 aa).

The PINc domain maps to 4–133 (LLDVNVLIAL…DAALADSASA (130 aa)). Asp-6 and Asp-106 together coordinate Mg(2+).

Belongs to the PINc/VapC protein family. The cofactor is Mg(2+).

Toxic component of a type II toxin-antitoxin (TA) system. An RNase. Its toxic effect is neutralized by coexpression with cognate antitoxin VapB39. The chain is Ribonuclease VapC39 from Mycobacterium tuberculosis (strain CDC 1551 / Oshkosh).